Reading from the N-terminus, the 244-residue chain is Heat stress transcription factor B-3 (244 aa).

Residues 38-132 mediate DNA binding; it reads PPPFLVKTYK…LMSNIRRRKS (95 aa). Positions 173 to 218 are hydrophobic repeat HR-A/B; it reads TSSSFVYTALLDENKCLKNENELLSCELGKTKKKCKQLMELVERYR. A Nuclear localization signal motif is present at residues 202-208; the sequence is KTKKKCK. The disordered stretch occupies residues 216 to 244; the sequence is RYRGEDEDATDESDDEEDEGLKLFGVKLE. Positions 220-234 are enriched in acidic residues; it reads EDEDATDESDDEEDE. Residues 236-243 carry the Nuclear export signal motif; that stretch reads LKLFGVKL.

It belongs to the HSF family. Class B subfamily. In terms of assembly, homotrimer. In terms of processing, exhibits temperature-dependent phosphorylation.

It localises to the cytoplasm. Its subcellular location is the nucleus. Functionally, transcriptional regulator that specifically binds DNA sequence 5'-AGAAnnTTCT-3' known as heat shock promoter elements (HSE). The chain is Heat stress transcription factor B-3 (HSFB3) from Arabidopsis thaliana (Mouse-ear cress).